The sequence spans 243 residues: UPF0280 protein Memar_1519 (243 aa).

The protein belongs to the UPF0280 family.

This Methanoculleus marisnigri (strain ATCC 35101 / DSM 1498 / JR1) protein is UPF0280 protein Memar_1519.